Reading from the N-terminus, the 461-residue chain is Transcriptional activator RocR (461 aa).

Asp57 bears the 4-aspartylphosphate mark. Residues 143-372 (ILGTSPAIQD…EHMIEGAMNF (230 aa)) form the Sigma-54 factor interaction domain. ATP-binding positions include 171 to 178 (GETGTGKE) and 233 to 242 (AHGGTLLLDE). Positions 434–453 (ISKAAQELGISRQSLQYRLK) form a DNA-binding region, H-T-H motif.

Positive regulator of arginine catabolism. Controls the transcription of the two operons rocABC and rocDEF and probably acts by binding to the corresponding upstream activating sequences. The protein is Transcriptional activator RocR (rocR) of Bacillus subtilis (strain 168).